The sequence spans 294 residues: Tetraspanin-15 (294 aa).

The Cytoplasmic portion of the chain corresponds to 1-23 (MPRGDSEQVRYCARFSYLWLKFS). A helical membrane pass occupies residues 24-44 (LVIYSTVFWLIGGLVLSVGIY). The Extracellular portion of the chain corresponds to 45–62 (AEVERQKYKTLESAFLAP). Residues 63-83 (AIILILLGVVMFIVSFIGVLA) form a helical membrane-spanning segment. Topologically, residues 84–93 (SLRDNLCLLQ) are cytoplasmic. The chain crosses the membrane as a helical span at residues 94–114 (AFMYILGICLIIELIGGVVAL). The Extracellular portion of the chain corresponds to 115 to 235 (IFRNQTIDFL…WFTDNYTIMA (121 aa)). N-linked (GlcNAc...) asparagine glycosylation occurs at Asn118. 4 disulfides stabilise this stretch: Cys154-Cys219, Cys155-Cys185, Cys171-Cys179, and Cys186-Cys198. Residues Asn189 and Asn230 are each glycosylated (N-linked (GlcNAc...) asparagine). A helical transmembrane segment spans residues 236–256 (GVLLGILLPQFLGVLLTFLYI). Topologically, residues 257–294 (TRVEDIITEHSVTDGLLGPGTKAGVEAAGTGCCMCYPI) are cytoplasmic.

This sequence belongs to the tetraspanin (TM4SF) family. Interacts with ADAM10; the interaction influences ADAM10 substrate specificity, endocytosis and turnover. Palmitoylated.

It is found in the cell membrane. It localises to the late endosome membrane. Part of TspanC8 subgroup, composed of 6 members that interact with the transmembrane metalloprotease ADAM10. This interaction is required for ADAM10 exit from the endoplasmic reticulum and for enzymatic maturation and trafficking to the cell surface as well as substrate specificity. Different TspanC8/ADAM10 complexes have distinct substrates. Promotes ADAM10-mediated cleavage of CDH2. Negatively regulates ligand-induced Notch activity probably by regulating ADAM10 activity. This is Tetraspanin-15 (TSPAN15) from Bos taurus (Bovine).